The following is a 239-amino-acid chain: Phosphoribosylaminoimidazole-succinocarboxamide synthase (239 aa).

Belongs to the SAICAR synthetase family.

The enzyme catalyses 5-amino-1-(5-phospho-D-ribosyl)imidazole-4-carboxylate + L-aspartate + ATP = (2S)-2-[5-amino-1-(5-phospho-beta-D-ribosyl)imidazole-4-carboxamido]succinate + ADP + phosphate + 2 H(+). It functions in the pathway purine metabolism; IMP biosynthesis via de novo pathway; 5-amino-1-(5-phospho-D-ribosyl)imidazole-4-carboxamide from 5-amino-1-(5-phospho-D-ribosyl)imidazole-4-carboxylate: step 1/2. This is Phosphoribosylaminoimidazole-succinocarboxamide synthase from Bacillus cereus (strain G9842).